A 219-amino-acid polypeptide reads, in one-letter code: Small ribosomal subunit protein uS3c (219 aa).

The region spanning 39 to 109 (IRQYIEKNLS…QIRINVIEVK (71 aa)) is the KH type-2 domain.

The protein belongs to the universal ribosomal protein uS3 family. As to quaternary structure, part of the 30S ribosomal subunit.

Its subcellular location is the plastid. It localises to the cyanelle. The polypeptide is Small ribosomal subunit protein uS3c (rps3) (Cyanophora paradoxa).